A 370-amino-acid polypeptide reads, in one-letter code: Aminomethyltransferase (370 aa).

Belongs to the GcvT family. In terms of assembly, the glycine cleavage system is composed of four proteins: P, T, L and H.

The catalysed reaction is N(6)-[(R)-S(8)-aminomethyldihydrolipoyl]-L-lysyl-[protein] + (6S)-5,6,7,8-tetrahydrofolate = N(6)-[(R)-dihydrolipoyl]-L-lysyl-[protein] + (6R)-5,10-methylene-5,6,7,8-tetrahydrofolate + NH4(+). Functionally, the glycine cleavage system catalyzes the degradation of glycine. This is Aminomethyltransferase from Clostridium botulinum (strain Loch Maree / Type A3).